We begin with the raw amino-acid sequence, 315 residues long: Protein MFI (315 aa).

Can homodimerize. Interacts with MFF; the interaction inhibits MFF interaction with DNM1L. As to expression, enriched in the pancreatic beta cell and the testis and is expressed at low levels in other tissues tested.

Its subcellular location is the cytoplasm. It is found in the cytosol. The protein localises to the mitochondrion outer membrane. In terms of biological role, acts as an inhibitor of mitochondrial fission. Interacts with MFF and prevents DNM1L recruitment to mitochondria, promoting a more fused mitochondrial network. The chain is Protein MFI from Mus musculus (Mouse).